The sequence spans 331 residues: 6-phosphogluconolactonase (331 aa).

Lysine 287 carries the N6-acetyllysine modification.

This sequence belongs to the cycloisomerase 2 family.

It catalyses the reaction 6-phospho-D-glucono-1,5-lactone + H2O = 6-phospho-D-gluconate + H(+). Its pathway is carbohydrate degradation; pentose phosphate pathway; D-ribulose 5-phosphate from D-glucose 6-phosphate (oxidative stage): step 2/3. In terms of biological role, catalyzes the hydrolysis of 6-phosphogluconolactone to 6-phosphogluconate. This is 6-phosphogluconolactonase from Escherichia coli O139:H28 (strain E24377A / ETEC).